A 685-amino-acid chain; its full sequence is Augmin complex subunit dgt5 (685 aa).

Coiled coils occupy residues 87–165 (LQRY…NKIQ) and 342–379 (NMRNFNRSQNEFLREQIEQLRLELDAGAKQLENHDLKL).

In terms of assembly, component of the augmin complex composed of dgt2, dgt3, dgt4, dgt5, dgt6, msd1, msd5 and wac. The complex interacts directly or indirectly with microtubules and is required for centrosome-independent generation of spindle microtubules.

The protein localises to the cytoplasm. It is found in the cytoskeleton. Its subcellular location is the spindle. The protein resides in the chromosome. It localises to the centromere. The protein localises to the kinetochore. It is found in the microtubule organizing center. Its subcellular location is the centrosome. Its function is as follows. As part of the augmin complex, plays a role in centrosome-independent generation of spindle microtubules. The complex is required for mitotic spindle assembly through its involvement in localizing gamma-tubulin to spindle microtubules. This Drosophila melanogaster (Fruit fly) protein is Augmin complex subunit dgt5.